The chain runs to 406 residues: MNIFRDKKTHINIATIGHFNHGKTTLSAAIAMTLANKKYRLDKKSIKVTLEEKNQGIGIYTHHFQYETTLRHYSHTDCPGHTDYINNMIAGISQVDSTILVVSAVDGSMSQTKEHLLIAKLLGISSFIVFINKEDQLDDDKFVYLVQKEISQFLMSHGFQTNKIPIVSGSALLALETLIQQPNVLRGENYWVDKIYTLIELLDSYIPKPKRKKDKHFLMWIDSVKFLPNIGPIAMGRIEQGTIKVGEFIDIVGFRETRTAKIISLEFFNQSCMQVLAGDDIGVSIEGTKNHNDIKKGMIISTPGTIKSWLEFEAQVYILKREEGGRTSPFFKGYCPQFFFKTTCVTGRIEAIEYTTGSKTWMIMPGDKLKIQVNLVYPIGIKKRMRFLIREGGVLVGVGIISNLIK.

In terms of domain architecture, tr-type G spans 8-210 (KTHINIATIG…LLDSYIPKPK (203 aa)). Residues 17–24 (GHFNHGKT), 77–81 (DCPGH), and 132–135 (NKED) each bind GTP. T24 serves as a coordination point for Mg(2+).

Belongs to the TRAFAC class translation factor GTPase superfamily. Classic translation factor GTPase family. EF-Tu/EF-1A subfamily. As to quaternary structure, monomer.

It is found in the plastid. The protein resides in the chloroplast. It catalyses the reaction GTP + H2O = GDP + phosphate + H(+). Its function is as follows. GTP hydrolase that promotes the GTP-dependent binding of aminoacyl-tRNA to the A-site of ribosomes during protein biosynthesis. This chain is Elongation factor Tu, chloroplastic (tufA), found in Chaetosphaeridium globosum (Charophycean green alga).